The primary structure comprises 336 residues: Eukaryotic translation initiation factor 3 subunit I (336 aa).

WD repeat units follow at residues 8 to 49, 50 to 91, 93 to 135, 144 to 183, 187 to 226, and 285 to 324; these read GHER…GTYN, GHNG…KAWE, PTAI…GPQP, PIGS…EVAS, NHIG…VIKS, and GGFG…FRAK.

Belongs to the eIF-3 subunit I family. Component of the eukaryotic translation initiation factor 3 (eIF-3) complex.

The protein resides in the cytoplasm. Component of the eukaryotic translation initiation factor 3 (eIF-3) complex, which is involved in protein synthesis of a specialized repertoire of mRNAs and, together with other initiation factors, stimulates binding of mRNA and methionyl-tRNAi to the 40S ribosome. The eIF-3 complex specifically targets and initiates translation of a subset of mRNAs involved in cell proliferation. The protein is Eukaryotic translation initiation factor 3 subunit I of Puccinia graminis f. sp. tritici (strain CRL 75-36-700-3 / race SCCL) (Black stem rust fungus).